The chain runs to 513 residues: Maturase K (513 aa).

Belongs to the intron maturase 2 family. MatK subfamily.

The protein localises to the plastid. It localises to the chloroplast. Its function is as follows. Usually encoded in the trnK tRNA gene intron. Probably assists in splicing its own and other chloroplast group II introns. This Sporobolus michauxianus (Prairie cordgrass) protein is Maturase K.